The primary structure comprises 456 residues: Alcohol acyl transferase 1 allele GSc (456 aa).

Catalysis depends on proton acceptor residues H165 and N386.

It belongs to the plant acyltransferase family. Expressed at very low levels in the skin of ripe fruit.

Its function is as follows. Involved in the biosynthesis of volatile esters which confer ripe apple fruit flavor. Alcohol acyl transferase that can use a wide range of alcohols as substrate to produce esters. In Malus domestica (Apple), this protein is Alcohol acyl transferase 1 allele GSc.